The sequence spans 513 residues: NAD(P)H-quinone oxidoreductase subunit 2 (513 aa).

A run of 14 helical transmembrane segments spans residues 12-32 (TLWP…VDLI), 41-61 (LPYL…PMWI), 77-97 (LSVV…LMSV), 104-124 (SLAT…AMLL), 130-150 (MAMI…LSGY), 165-185 (LLIG…LYGF), 199-219 (IVNL…GICF), 238-258 (PTPV…ALAI), 272-292 (WQTL…VVAI), 300-320 (MLAY…AIGT), 328-348 (ILYI…VVLF), 372-392 (LVLS…GFFG), 394-414 (LYLF…FGLV), and 456-476 (AGML…PPLI). A compositionally biased stretch (polar residues) spans 494 to 505 (TATPVSRVSTGA). Residues 494–513 (TATPVSRVSTGAQAPADHGR) are disordered.

Belongs to the complex I subunit 2 family. In terms of assembly, NDH-1 can be composed of about 15 different subunits; different subcomplexes with different compositions have been identified which probably have different functions.

It is found in the cell inner membrane. It catalyses the reaction a plastoquinone + NADH + (n+1) H(+)(in) = a plastoquinol + NAD(+) + n H(+)(out). The catalysed reaction is a plastoquinone + NADPH + (n+1) H(+)(in) = a plastoquinol + NADP(+) + n H(+)(out). NDH-1 shuttles electrons from an unknown electron donor, via FMN and iron-sulfur (Fe-S) centers, to quinones in the respiratory and/or the photosynthetic chain. The immediate electron acceptor for the enzyme in this species is believed to be plastoquinone. Couples the redox reaction to proton translocation, and thus conserves the redox energy in a proton gradient. Cyanobacterial NDH-1 also plays a role in inorganic carbon-concentration. The sequence is that of NAD(P)H-quinone oxidoreductase subunit 2 from Gloeobacter violaceus (strain ATCC 29082 / PCC 7421).